A 301-amino-acid chain; its full sequence is Probable enoyl-CoA hydratase 2, mitochondrial (301 aa).

The N-terminal 32 residues, 1–32 (MSFVKYLRRDNLLQLAGKPSLSRNYILQTCRT), are a transit peptide targeting the mitochondrion. Residues 105–109 (AGADL) and G152 each bind substrate.

Belongs to the enoyl-CoA hydratase/isomerase family.

It is found in the mitochondrion. The catalysed reaction is a (3S)-3-hydroxyacyl-CoA = a (2E)-enoyl-CoA + H2O. It carries out the reaction a 4-saturated-(3S)-3-hydroxyacyl-CoA = a (3E)-enoyl-CoA + H2O. It functions in the pathway lipid metabolism; fatty acid beta-oxidation. Its function is as follows. Straight-chain enoyl-CoA thioesters from C4 up to at least C16 are processed, although with decreasing catalytic rate. The protein is Probable enoyl-CoA hydratase 2, mitochondrial of Arabidopsis thaliana (Mouse-ear cress).